The sequence spans 1110 residues: Error-prone DNA polymerase (1110 aa).

A disordered region spans residues 1072 to 1110 (LGELHEPLNDDRREHPDNPAQRIRHPRDVRILPPSRDFH). Composition is skewed to basic and acidic residues over residues 1073-1088 (GELH…EHPD) and 1097-1110 (PRDV…RDFH).

The protein belongs to the DNA polymerase type-C family. DnaE2 subfamily.

The protein resides in the cytoplasm. The catalysed reaction is DNA(n) + a 2'-deoxyribonucleoside 5'-triphosphate = DNA(n+1) + diphosphate. Its function is as follows. DNA polymerase involved in damage-induced mutagenesis and translesion synthesis (TLS). It is not the major replicative DNA polymerase. This Rhodopseudomonas palustris (strain BisB5) protein is Error-prone DNA polymerase.